The sequence spans 581 residues: Probable hexosyltransferase MUCI70 (581 aa).

Residues Met-1 to Lys-58 lie on the Cytoplasmic side of the membrane. Residues Val-59 to Gly-79 form a helical; Signal-anchor for type II membrane protein membrane-spanning segment. Residues Lys-80–Ala-581 are Lumenal-facing. Residues Asn-96, Asn-102, Asn-119, Asn-194, Asn-224, Asn-285, Asn-382, Asn-411, and Asn-488 are each glycosylated (N-linked (GlcNAc...) asparagine). Residues Arg-514 to Ala-581 are disordered. Positions Pro-520–Val-536 are enriched in pro residues. The span at Pro-553–Ala-571 shows a compositional bias: basic residues.

Belongs to the glycosyltransferase 8 family. As to expression, expressed in siliques and seeds.

It localises to the golgi apparatus membrane. It functions in the pathway glycan metabolism; pectin biosynthesis. Probable glycosyltransferase involved in pectin and/or xylans biosynthesis in cell walls. Together with IRX14, required for xylan and pectin synthesis in seed coat epidermal (SCE) cells. Collaboratively with GAUT11, essential for the accumulation of seed mucilage, a gelatinous wall rich in unbranched rhamnogalacturonan I (RG I), and for shaping the surface morphology of seeds. This chain is Probable hexosyltransferase MUCI70, found in Arabidopsis thaliana (Mouse-ear cress).